Here is a 277-residue protein sequence, read N- to C-terminus: Caspase-3 (277 aa).

Residue M1 is modified to N-acetylmethionine. 2 propeptides span residues 1–9 and 10–28; these read MENNETSVD and SKSI…KSMD. K11 bears the N6-acetyllysine mark. Phosphoserine is present on S26. Residues H121 and C163 contribute to the active site. C163 carries the post-translational modification S-nitrosocysteine; in inhibited form.

It belongs to the peptidase C14A family. Heterotetramer that consists of two anti-parallel arranged heterodimers, each one formed by a 17 kDa (p17) and a 12 kDa (p12) subunit. Interacts with BIRC6/bruce. Post-translationally, cleavage by granzyme B, caspase-6, caspase-8 and caspase-10 generates the two active subunits. Additional processing of the propeptides is likely due to the autocatalytic activity of the activated protease. Active heterodimers between the small subunit of caspase-7 protease and the large subunit of caspase-3 also occur and vice versa. S-nitrosylated on its catalytic site cysteine in unstimulated cell lines and denitrosylated upon activation of the Fas apoptotic pathway, associated with an increase in intracellular caspase activity. Fas therefore activates caspase-3 not only by inducing the cleavage of the caspase zymogen to its active subunits, but also by stimulating the denitrosylation of its active site thiol. In terms of processing, ubiquitinated by BIRC6; this activity is inhibited by DIABLO/SMAC.

Its subcellular location is the cytoplasm. It carries out the reaction Strict requirement for an Asp residue at positions P1 and P4. It has a preferred cleavage sequence of Asp-Xaa-Xaa-Asp-|- with a hydrophobic amino-acid residue at P2 and a hydrophilic amino-acid residue at P3, although Val or Ala are also accepted at this position.. Inhibited by BIRC6; following inhibition of BIRC6-caspase binding by DIABLO/SMAC, BIRC6 is subjected to caspase cleavage, leading to an increase in active caspases. In terms of biological role, involved in the activation cascade of caspases responsible for apoptosis execution. At the onset of apoptosis, it proteolytically cleaves poly(ADP-ribose) polymerase PARP1 at a '216-Asp-|-Gly-217' bond. Cleaves and activates sterol regulatory element binding proteins (SREBPs) between the basic helix-loop-helix leucine zipper domain and the membrane attachment domain. Cleaves and activates caspase-6, -7 and -9 (CASP6, CASP7 and CASP9, respectively). Cleaves and inactivates interleukin-18 (IL18). Triggers cell adhesion in sympathetic neurons through RET cleavage. Cleaves IL-1 beta between an Asp and an Ala, releasing the mature cytokine which is involved in a variety of inflammatory processes. Cleaves and inhibits serine/threonine-protein kinase AKT1 in response to oxidative stress. Acts as an inhibitor of type I interferon production during virus-induced apoptosis by mediating cleavage of antiviral proteins CGAS, IRF3 and MAVS, thereby preventing cytokine overproduction. Also involved in pyroptosis by mediating cleavage and activation of gasdermin-E (GSDME). Cleaves XRCC4 and phospholipid scramblase proteins XKR4, XKR8 and XKR9, leading to promote phosphatidylserine exposure on apoptotic cell surface. Cleaves BIRC6 following inhibition of BIRC6-caspase binding by DIABLO/SMAC. This is Caspase-3 (CASP3) from Mesocricetus auratus (Golden hamster).